Here is a 575-residue protein sequence, read N- to C-terminus: MISGILASPGIAFGKALLLKEDEIVIDRKKISADKVDQEVERFLSGRAKASAQLEAIKTKAGETFGEEKEAIFEGHIMLLEDEELEQEIIALIKDKHMTADAAAHEVIEGQATALEELDDEYLKERAADVRDIGKRLLRNILGLAIIDLSAIQEEVILVAADLTPSETAQLNLQKVLGFITDAGGRTSHTSIMARSLELPAIVGTGSVTAQVKNGDYLILDAVNNQVYVNPTNDVIEQLRAVQEQVATEKAELAKLKDLPAITLDGHQVEVCANIGTVRDVEGAERNGAEGVGLYRTEFLFMDRDALPTEEEQFAAYKAVAEACGSQAVIVRTMDIGGDKELPYMNFPKEENPFLGWRAVRIAMDRKEILRDQVRAILRASAFGKLRIMFPMIISVEEVRALRKEIEIYKQELRDEGKAFDESIEIGVMVETPAAATIARHLAKEVDFFSIGTNDLTQYTLAVDRGNDMISHLYQPMSPSVLNLIKQVIDASHAEGKWTGMCGELAGDERATLLLLGMGLDEFSMSAISIPRIKKIIRNTNFEDAKVLAEQALAQPTTDELMTLVNKFIEEKTIC.

The Tele-phosphohistidine intermediate role is filled by His189. Arg296 and Arg332 together coordinate phosphoenolpyruvate. Mg(2+) contacts are provided by Glu431 and Asp455. Residues 454–455 and Arg465 contribute to the phosphoenolpyruvate site; that span reads ND. Cys502 acts as the Proton donor in catalysis.

Belongs to the PEP-utilizing enzyme family. Homodimer. It depends on Mg(2+) as a cofactor.

It localises to the cytoplasm. The enzyme catalyses L-histidyl-[protein] + phosphoenolpyruvate = N(pros)-phospho-L-histidyl-[protein] + pyruvate. Its function is as follows. General (non sugar-specific) component of the phosphoenolpyruvate-dependent sugar phosphotransferase system (sugar PTS). This major carbohydrate active-transport system catalyzes the phosphorylation of incoming sugar substrates concomitantly with their translocation across the cell membrane. Enzyme I transfers the phosphoryl group from phosphoenolpyruvate (PEP) to the phosphoryl carrier protein (HPr). In Salmonella typhimurium (strain LT2 / SGSC1412 / ATCC 700720), this protein is Phosphoenolpyruvate-protein phosphotransferase (ptsI).